The following is a 249-amino-acid chain: NADH-quinone oxidoreductase subunit C (249 aa).

This sequence belongs to the complex I 30 kDa subunit family. As to quaternary structure, NDH-1 is composed of 14 different subunits. Subunits NuoB, C, D, E, F, and G constitute the peripheral sector of the complex.

It localises to the cell inner membrane. The enzyme catalyses a quinone + NADH + 5 H(+)(in) = a quinol + NAD(+) + 4 H(+)(out). In terms of biological role, NDH-1 shuttles electrons from NADH, via FMN and iron-sulfur (Fe-S) centers, to quinones in the respiratory chain. The immediate electron acceptor for the enzyme in this species is believed to be ubiquinone. Couples the redox reaction to proton translocation (for every two electrons transferred, four hydrogen ions are translocated across the cytoplasmic membrane), and thus conserves the redox energy in a proton gradient. In Xylella fastidiosa (strain M12), this protein is NADH-quinone oxidoreductase subunit C.